The sequence spans 415 residues: Squalene synthase 3 (415 aa).

Helical transmembrane passes span 281-301 (AIFR…ALCY) and 392-412 (LIII…SNLP).

Belongs to the phytoene/squalene synthase family. The cofactor is Mg(2+). Requires Mn(2+) as cofactor.

Its subcellular location is the endoplasmic reticulum membrane. It catalyses the reaction 2 (2E,6E)-farnesyl diphosphate + NADH + H(+) = squalene + 2 diphosphate + NAD(+). It carries out the reaction 2 (2E,6E)-farnesyl diphosphate + NADPH + H(+) = squalene + 2 diphosphate + NADP(+). It functions in the pathway terpene metabolism; lanosterol biosynthesis; lanosterol from farnesyl diphosphate: step 1/3. Its function is as follows. Component of the triterpene saponins (e.g. ginsenosides or panaxosides) and phytosterols biosynthetic pathways. Catalyzes the biosynthesis of squalene. The sequence is that of Squalene synthase 3 from Panax ginseng (Korean ginseng).